The chain runs to 315 residues: Methionyl-tRNA formyltransferase (315 aa).

A (6S)-5,6,7,8-tetrahydrofolate-binding site is contributed by 113 to 116 (SLLP).

The protein belongs to the Fmt family.

The catalysed reaction is L-methionyl-tRNA(fMet) + (6R)-10-formyltetrahydrofolate = N-formyl-L-methionyl-tRNA(fMet) + (6S)-5,6,7,8-tetrahydrofolate + H(+). Attaches a formyl group to the free amino group of methionyl-tRNA(fMet). The formyl group appears to play a dual role in the initiator identity of N-formylmethionyl-tRNA by promoting its recognition by IF2 and preventing the misappropriation of this tRNA by the elongation apparatus. The chain is Methionyl-tRNA formyltransferase from Pseudoalteromonas atlantica (strain T6c / ATCC BAA-1087).